Reading from the N-terminus, the 324-residue chain is Glyoxylate/hydroxypyruvate reductase B (324 aa).

Residues Arg237 and Glu266 contribute to the active site. The active-site Proton donor is the His285.

Belongs to the D-isomer specific 2-hydroxyacid dehydrogenase family. GhrB subfamily. In terms of assembly, homodimer.

It is found in the cytoplasm. It catalyses the reaction glycolate + NADP(+) = glyoxylate + NADPH + H(+). The enzyme catalyses (R)-glycerate + NAD(+) = 3-hydroxypyruvate + NADH + H(+). The catalysed reaction is (R)-glycerate + NADP(+) = 3-hydroxypyruvate + NADPH + H(+). In terms of biological role, catalyzes the NADPH-dependent reduction of glyoxylate and hydroxypyruvate into glycolate and glycerate, respectively. The sequence is that of Glyoxylate/hydroxypyruvate reductase B from Escherichia coli O6:K15:H31 (strain 536 / UPEC).